Here is a 449-residue protein sequence, read N- to C-terminus: MSHIQLDYSKLAPFVADHELEYMQTQVTAVDKALREGTGAGNDFTGWIDLPENYDKEEFARIKKAAAKIQSDSEVLVVIGIGGSYLGARAAIEFLTHSFNNLLSKEERKAPQIFFAGNSISSTYLADLINVIGDRDFSVNVISKSGTTTEPAIAFRVFKELLINKYGKEEANKRIYATTDRAKGAVKVEADAEGWETFVIPDDVGGRFTVLTPVGLLPIAVSGADIDRLMEGANDARKEYGATSDLKENQAYQYAALRNILYRKGKTTEMLINYEPGMHYFSEWWKQLYGESEGKDGKGIFPAAADFSTDLHSMGQYVQEGMRNLFETVVKIENPRHSISIPEQNEDLDGLGYLQGKEIDFVNTKAFEGTLLAHTDGGVPNMIVKVPTMDAYSLGYVMYFFEIAVGISGYLNGVNPFDQPGVEAYKRNMFALLGKPGFEELAKDLNARL.

Glu-291 serves as the catalytic Proton donor. Catalysis depends on residues His-312 and Lys-426.

This sequence belongs to the GPI family.

Its subcellular location is the cytoplasm. It carries out the reaction alpha-D-glucose 6-phosphate = beta-D-fructose 6-phosphate. The protein operates within carbohydrate biosynthesis; gluconeogenesis. It functions in the pathway carbohydrate degradation; glycolysis; D-glyceraldehyde 3-phosphate and glycerone phosphate from D-glucose: step 2/4. Catalyzes the reversible isomerization of glucose-6-phosphate to fructose-6-phosphate. This Enterococcus faecalis (strain ATCC 700802 / V583) protein is Glucose-6-phosphate isomerase.